Consider the following 202-residue polypeptide: ATP-dependent Clp protease proteolytic subunit (202 aa).

The active-site Nucleophile is Ser101. The active site involves His126.

It belongs to the peptidase S14 family. Component of the chloroplastic Clp protease core complex.

The protein localises to the plastid. It localises to the chloroplast stroma. The enzyme catalyses Hydrolysis of proteins to small peptides in the presence of ATP and magnesium. alpha-casein is the usual test substrate. In the absence of ATP, only oligopeptides shorter than five residues are hydrolyzed (such as succinyl-Leu-Tyr-|-NHMec, and Leu-Tyr-Leu-|-Tyr-Trp, in which cleavage of the -Tyr-|-Leu- and -Tyr-|-Trp bonds also occurs).. Functionally, cleaves peptides in various proteins in a process that requires ATP hydrolysis. Has a chymotrypsin-like activity. Plays a major role in the degradation of misfolded proteins. This Illicium oligandrum (Star anise) protein is ATP-dependent Clp protease proteolytic subunit.